The sequence spans 273 residues: Dermonecrotic toxin LsaSicTox-alphaIB1bi (273 aa).

H5 is an active-site residue. Mg(2+)-binding residues include E25 and D27. The active-site Nucleophile is the H41. 2 disulfide bridges follow: C45-C51 and C47-C190. Residue D85 coordinates Mg(2+).

Belongs to the arthropod phospholipase D family. Class II subfamily. Requires Mg(2+) as cofactor. Expressed by the venom gland.

It is found in the secreted. The catalysed reaction is an N-(acyl)-sphingosylphosphocholine = an N-(acyl)-sphingosyl-1,3-cyclic phosphate + choline. It catalyses the reaction an N-(acyl)-sphingosylphosphoethanolamine = an N-(acyl)-sphingosyl-1,3-cyclic phosphate + ethanolamine. It carries out the reaction a 1-acyl-sn-glycero-3-phosphocholine = a 1-acyl-sn-glycero-2,3-cyclic phosphate + choline. The enzyme catalyses a 1-acyl-sn-glycero-3-phosphoethanolamine = a 1-acyl-sn-glycero-2,3-cyclic phosphate + ethanolamine. Functionally, dermonecrotic toxins cleave the phosphodiester linkage between the phosphate and headgroup of certain phospholipids (sphingolipid and lysolipid substrates), forming an alcohol (often choline) and a cyclic phosphate. This toxin acts on sphingomyelin (SM). It may also act on ceramide phosphoethanolamine (CPE), lysophosphatidylcholine (LPC) and lysophosphatidylethanolamine (LPE), but not on lysophosphatidylserine (LPS), and lysophosphatidylglycerol (LPG). It acts by transphosphatidylation, releasing exclusively cyclic phosphate products as second products. Induces dermonecrosis, hemolysis, increased vascular permeability, edema, inflammatory response, and platelet aggregation. The protein is Dermonecrotic toxin LsaSicTox-alphaIB1bi of Loxosceles sabina (Tucson recluse spider).